Here is a 753-residue protein sequence, read N- to C-terminus: Polyribonucleotide nucleotidyltransferase (753 aa).

Aspartate 543 and aspartate 549 together coordinate Mg(2+). Positions 609–668 constitute a KH domain; it reads PRITTVKIPVAKIGELIGPKGKNINALTEETGANISIEDDGTVFISAADGASAEAAIEKI. The S1 motif domain occupies 680–749; the sequence is GERFLGTVVK…NRGKISLVPV (70 aa).

This sequence belongs to the polyribonucleotide nucleotidyltransferase family. The cofactor is Mg(2+).

The protein resides in the cytoplasm. The catalysed reaction is RNA(n+1) + phosphate = RNA(n) + a ribonucleoside 5'-diphosphate. Involved in mRNA degradation. Catalyzes the phosphorolysis of single-stranded polyribonucleotides processively in the 3'- to 5'-direction. This chain is Polyribonucleotide nucleotidyltransferase, found in Corynebacterium glutamicum (strain R).